The following is a 577-amino-acid chain: Proline--tRNA ligase (577 aa).

It belongs to the class-II aminoacyl-tRNA synthetase family. ProS type 1 subfamily. Homodimer.

It is found in the cytoplasm. It carries out the reaction tRNA(Pro) + L-proline + ATP = L-prolyl-tRNA(Pro) + AMP + diphosphate. Functionally, catalyzes the attachment of proline to tRNA(Pro) in a two-step reaction: proline is first activated by ATP to form Pro-AMP and then transferred to the acceptor end of tRNA(Pro). As ProRS can inadvertently accommodate and process non-cognate amino acids such as alanine and cysteine, to avoid such errors it has two additional distinct editing activities against alanine. One activity is designated as 'pretransfer' editing and involves the tRNA(Pro)-independent hydrolysis of activated Ala-AMP. The other activity is designated 'posttransfer' editing and involves deacylation of mischarged Ala-tRNA(Pro). The misacylated Cys-tRNA(Pro) is not edited by ProRS. This Limosilactobacillus reuteri (strain DSM 20016) (Lactobacillus reuteri) protein is Proline--tRNA ligase.